The following is a 355-amino-acid chain: Protein RecA (355 aa).

65-72 (GPESSGKT) provides a ligand contact to ATP. The tract at residues 333–355 (IEEKDEKQAEAEKNENTNLFDEE) is disordered. The span at 336 to 347 (KDEKQAEAEKNE) shows a compositional bias: basic and acidic residues.

The protein belongs to the RecA family.

The protein resides in the cytoplasm. In terms of biological role, can catalyze the hydrolysis of ATP in the presence of single-stranded DNA, the ATP-dependent uptake of single-stranded DNA by duplex DNA, and the ATP-dependent hybridization of homologous single-stranded DNAs. It interacts with LexA causing its activation and leading to its autocatalytic cleavage. In Staphylococcus carnosus (strain TM300), this protein is Protein RecA.